We begin with the raw amino-acid sequence, 129 residues long: Profilin-4 (129 aa).

The protein belongs to the profilin family. In terms of tissue distribution, expressed in testis, in seminiferous tubules (at protein level). Expressed in spermatocytes and spermatids, but not in spermatogonium.

Its subcellular location is the cytoplasm. Involved in male fertility. Required for manchette development and acrosome biogenesis during spermiogenesis. Binds in vitro to phospholipids, including phosphatidylinositol 3-phosphate (PtdIns(3)P), phosphatidylinositol 4,5-bisphosphate (PtdIns(4,5)P2), phosphatidylinositol 4-phosphate (PtdIns(4)P) and phosphatidic acid (PA). Contrary to other profilin family members, does not bind to actin in vitro. The chain is Profilin-4 (Pfn4) from Rattus norvegicus (Rat).